The following is a 211-amino-acid chain: Mediator of RNA polymerase II transcription subunit 20 (211 aa).

This sequence belongs to the Mediator complex subunit 20 family. In terms of assembly, component of the Mediator complex.

The protein localises to the nucleus. In terms of biological role, component of the Mediator complex, a coactivator involved in the regulated transcription of nearly all RNA polymerase II-dependent genes. Mediator functions as a bridge to convey information from gene-specific regulatory proteins to the basal RNA polymerase II transcription machinery. Mediator is recruited to promoters by direct interactions with regulatory proteins and serves as a scaffold for the assembly of a functional preinitiation complex with RNA polymerase II and the general transcription factors. This chain is Mediator of RNA polymerase II transcription subunit 20 (MED20), found in Gallus gallus (Chicken).